Consider the following 203-residue polypeptide: MRLMARTATNRTATVRRTTKETDITVTLDLDSPVSTPPTTGHGFLDHMLDALARHGRLGLSVRATGDLHIEPHHLIEDVGITLGQALNQALGGRRGIERYGSAFVPMDETLAHVVLDLSGRAHLAFEPERLDVWGDAGGMTHYHLREFLRGFCNHAGVTLHVRLLAGREAHHVIEAMVKAFARALRDAVRVTSEELASTKGLL.

This sequence belongs to the imidazoleglycerol-phosphate dehydratase family.

It localises to the cytoplasm. The catalysed reaction is D-erythro-1-(imidazol-4-yl)glycerol 3-phosphate = 3-(imidazol-4-yl)-2-oxopropyl phosphate + H2O. It participates in amino-acid biosynthesis; L-histidine biosynthesis; L-histidine from 5-phospho-alpha-D-ribose 1-diphosphate: step 6/9. In Deinococcus geothermalis (strain DSM 11300 / CIP 105573 / AG-3a), this protein is Imidazoleglycerol-phosphate dehydratase.